The sequence spans 245 residues: Proteolipid protein DM alpha (245 aa).

Transmembrane regions (helical) follow at residues 19–35, 71–87, 117–133, and 204–220; these read LIATILCFVGVALFCGC, IIYGTASFSFLYGVLLL, FIFLTYALGVTWMGVFA, and LFIATFAGAAATVIALL.

The protein belongs to the myelin proteolipid protein family. In terms of tissue distribution, highly expressed in white matter in myelinating shark brain.

It is found in the membrane. This is Proteolipid protein DM alpha from Squalus acanthias (Spiny dogfish).